We begin with the raw amino-acid sequence, 717 residues long: MEEFDKSISFDGRDIRLKIGLLAPQAGGSVLIQSGETAVLVTATTAKAREGVDFLPLTVDYEERLYAAGRIPGGFLRREGRPPEKAILTGRLIDRPLRPLFPNWMRDDIQVVATTLSMDEEVPPDVLAVTGASVAVLLAGIPFQGPMAAVRVGLLGDEFIINPTYKEIHNGELDLVVAGSPEGVVMIEAGANQLPERDIIEAIDFGYEAVRDLITAQRELIDQLGIPLVTREAPAVNETVQNFLREQAKEEIKQILSQFTLSKTERDEKLEAIENRIKETITALPDEDTLKAPTLEEPKLIGNLFKDLTKKLMRAQIIEDGVRVDGRQLDEVRPISCRVGVLPRRVHGSGLFNRGLTQVLSIATLGTPGDAQDLGDDLHPEDEKRYLHHYNFPPFSVGETRPMRSPGRREIGHGALAERAIVPVLPPQEEFPYVLRVVSEVLSSNGSTSMGSVCGSTLALMDAGVPLKKPVSGAAMGLIKEGEEVRILTDIQGIEDFLGDMDFKVAGTDSGITALQMDMKIPGLSMEVVAKAIEQALPARKHILEKMLATLEKPRTELSPHAPRLLTIKIDPDLIGLVIGPGGKTVKGITEQTGTKIDIDDDGTVTISSTDGEQAEKAKRLIYNMTRKLNEGEVYLGRVTRIIQIGAFVEVLPGKEGMIHISQLAEGRVGKVEDEVAVGDEVLVKVREIDSKGRLNLTRLGIHPDEAAAARKAATVV.

Mg(2+) contacts are provided by D496 and D502. The region spanning P563–I622 is the KH domain. Residues G632–L700 form the S1 motif domain.

The protein belongs to the polyribonucleotide nucleotidyltransferase family. Mg(2+) is required as a cofactor.

It is found in the cytoplasm. The catalysed reaction is RNA(n+1) + phosphate = RNA(n) + a ribonucleoside 5'-diphosphate. Functionally, involved in mRNA degradation. Catalyzes the phosphorolysis of single-stranded polyribonucleotides processively in the 3'- to 5'-direction. The protein is Polyribonucleotide nucleotidyltransferase of Microcystis aeruginosa (strain NIES-843 / IAM M-2473).